We begin with the raw amino-acid sequence, 349 residues long: MDNIETILRLAEEKILLVQSLKVLQEYKVEFLGKNGIVTNELKKLGSLSEQDRKEFGLKINKLKEEIQNIIKAKEEILEEEELNLKLSSDKIDLSLPARRYKQGSIHPITQCMEELIQVFAKFGFSIEDGPNIENDFHNFTALNFEDDHPARQMHDTFYLKGQENDKPMLLRTHTSTVQIRAMKNGKPPFRFIAPGRTYRSDSDMTHTPMFHQIEGLVIDKDINMGHLKYVITEFIRCFFENSNIELRFRPSFFPFTEPSAEVDIRMSKTDKWLEVLGCGMVHPNVLKNVGIDNSQYQGFAFGLGVERFAMLKYNIKDLRQFFEGDMRWLKHYSFSSFDIPNLAGGLTK.

Mg(2+) is bound at residue Glu-258.

The protein belongs to the class-II aminoacyl-tRNA synthetase family. Phe-tRNA synthetase alpha subunit type 1 subfamily. Tetramer of two alpha and two beta subunits. Mg(2+) is required as a cofactor.

The protein resides in the cytoplasm. It catalyses the reaction tRNA(Phe) + L-phenylalanine + ATP = L-phenylalanyl-tRNA(Phe) + AMP + diphosphate + H(+). The protein is Phenylalanine--tRNA ligase alpha subunit of Rickettsia bellii (strain RML369-C).